The sequence spans 334 residues: Replication-associated protein (334 aa).

A CRESS-DNA virus Rep endonuclease domain is found at R9–F111. The short motif at F16–Y19 is the RCR-1 element. Residues E50, H58, and H60 each contribute to the a divalent metal cation site. The RCR-2 motif lies at H58 to H60. Y98 (for DNA cleavage activity) is an active-site residue. Positions Y98 to K101 match the RCR-3 motif. D102 contacts a divalent metal cation. The interval S160–Y172 is oligomerization. An ATP-binding site is contributed by G213–T220. The interval I236 to P254 is transactivation. A Nuclear localization signal motif is present at residues K276–G286.

Belongs to the geminiviridae Rep protein family. As to quaternary structure, homooligomer. Rep binds to repeated DNA motifs (iterons). Forms the O-complex, which is a Rep-DNA complex involved in the initiation of RCR. Part of the C- and V-complexes which are RepA-Rep-DNA complexes involved in the c-sense and v-sense transcription. Requires Mg(2+) as cofactor. Mn(2+) serves as cofactor.

It localises to the host nucleus. In terms of biological role, essential for the replication of viral ssDNA. The closed circular ssDNA genome is first converted to a superhelical dsDNA. Rep binds a specific region at the genome origin of replication. It introduces an endonucleolytic nick within the conserved sequence 5'-TAATATTAC-3' in the intergenic region of the genome present in all geminiviruses, thereby initiating the rolling circle replication (RCR). Following cleavage, binds covalently to the 5'-phosphate of DNA as a tyrosyl ester. The cleavage gives rise to a free 3'-OH that serves as a primer for the cellular DNA polymerase. The polymerase synthesizes the (+) strand DNA by rolling circle mechanism. After one round of replication, a Rep-catalyzed nucleotidyl transfer reaction releases a circular single-stranded virus genome, thereby terminating the replication. Displays origin-specific DNA cleavage, nucleotidyl transferase, ATPase and helicase activities. Acts a an inhibitor of C-sense gene transcription. The sequence is that of Replication-associated protein from Phaseolus vulgaris (Kidney bean).